The following is a 236-amino-acid chain: MTDVTTSTENELRELAERGAAELADASAEELLRWTDEHFGGNYVVASNMQDAVLVEMAAKVRPGVDVLFLDTGYHFAETIGTRDAVEAVYDVHVVNVTPERTVAEQDELLGKNLFARDPGECCRLRKVVPLTNALKGYSAWVTGIRRVEAPTRANAPLISWDNAFGLVKINPIAAWTDEDMQNYIDANGILVNPLVYEGYPSIGCAPCTSKPIPGADPRSGRWAGLSKTECGLHVS.

4 residues coordinate [4Fe-4S] cluster: cysteine 122, cysteine 123, cysteine 205, and cysteine 208. Residue cysteine 231 is the Nucleophile; cysteine thiosulfonate intermediate of the active site.

This sequence belongs to the PAPS reductase family. CysH subfamily. [4Fe-4S] cluster is required as a cofactor.

Its subcellular location is the cytoplasm. It catalyses the reaction [thioredoxin]-disulfide + sulfite + AMP + 2 H(+) = adenosine 5'-phosphosulfate + [thioredoxin]-dithiol. It participates in sulfur metabolism; hydrogen sulfide biosynthesis; sulfite from sulfate. Its function is as follows. Catalyzes the formation of sulfite from adenosine 5'-phosphosulfate (APS) using thioredoxin as an electron donor. This Mycolicibacterium smegmatis (strain ATCC 700084 / mc(2)155) (Mycobacterium smegmatis) protein is Adenosine 5'-phosphosulfate reductase.